Consider the following 657-residue polypeptide: MKNFEIVSKFSPSKDQQNAIENITASIKNGNKYQTLLGVTGSGKTFTMANIIKNLQMPALIMTHNKSLAAQLYSEFKGFFPKNHIEYFISYYDYYQPEAYIPRQDLFIEKDSSINDELERLRLSATASLLSFDDVVTIASVSANYGLGNPAEYQGMVLFLEINKKFSLKFLLRKLVDMGYSRNDTYFDRGDFRVNGDIIDIYPAYFNDEAIRLEFFGDELDDMYHFDVIENKKTQNLKKFILYPTSQFIVGENRLKEAIKGIENELGERLEFFNDNGKLVEAQRLKQRVDFDLEMLESTGMCKGIENYARYLTGQNAGETPYSLFDYYEIKGMDYLVIIDESHVSLPQFRGMYAGDRSRKETLVEYGFRLPSALDNRPLMFDEFINKRAKFLFVSATPNDYELELSKDHVYYQILRPTGLLDPEIVLKDSDNQVEILYDMAKEVIADNERVLVTVLTKKMAEELSKYYLELGLKVKYMHSDIDAIERNELIRGLRTGDFDMLIGINLLREGLDLPEVSLIAIMDADKEGFLRSRTSLIQTMGRAARNVNGKVVMFCKKITNSMKEAIEITQKRRKYQDEYNKTHNITPKSVSRNVEESLKLDDTEAIDRAMKAEKMPSSERAKIVKDLRKQMMEAADKLEFEKAAALRDEIKKMRKL.

One can recognise a Helicase ATP-binding domain in the interval 25–163 (ASIKNGNKYQ…QGMVLFLEIN (139 aa)). Residue 38 to 45 (GVTGSGKT) participates in ATP binding. The Beta-hairpin motif lies at 91 to 114 (YYDYYQPEAYIPRQDLFIEKDSSI). The short motif at 130 to 133 (LSFD) is the DEAD box element. The Helicase C-terminal domain maps to 433-599 (QVEILYDMAK…SVSRNVEESL (167 aa)). Positions 622-657 (AKIVKDLRKQMMEAADKLEFEKAAALRDEIKKMRKL) constitute a UVR domain.

Belongs to the UvrB family. As to quaternary structure, forms a heterotetramer with UvrA during the search for lesions. Interacts with UvrC in an incision complex.

It localises to the cytoplasm. In terms of biological role, the UvrABC repair system catalyzes the recognition and processing of DNA lesions. A damage recognition complex composed of 2 UvrA and 2 UvrB subunits scans DNA for abnormalities. Upon binding of the UvrA(2)B(2) complex to a putative damaged site, the DNA wraps around one UvrB monomer. DNA wrap is dependent on ATP binding by UvrB and probably causes local melting of the DNA helix, facilitating insertion of UvrB beta-hairpin between the DNA strands. Then UvrB probes one DNA strand for the presence of a lesion. If a lesion is found the UvrA subunits dissociate and the UvrB-DNA preincision complex is formed. This complex is subsequently bound by UvrC and the second UvrB is released. If no lesion is found, the DNA wraps around the other UvrB subunit that will check the other stand for damage. In Campylobacter hominis (strain ATCC BAA-381 / DSM 21671 / CCUG 45161 / LMG 19568 / NCTC 13146 / CH001A), this protein is UvrABC system protein B.